The primary structure comprises 195 residues: Interferon tau (195 aa).

Positions 1–23 are cleaved as a signal peptide; that stretch reads MAFVLSLRMALVLVSYCPGGSLG. Disulfide bonds link Cys-24–Cys-122 and Cys-52–Cys-162. Residue Asn-101 is glycosylated (N-linked (GlcNAc...) asparagine).

This sequence belongs to the alpha/beta interferon family. IFN-alphaII subfamily. In terms of tissue distribution, constitutively and exclusively expressed in the mononuclear cells of the extraembryonic trophectoderm.

It localises to the secreted. Paracrine hormone primarily responsible for maternal recognition of pregnancy. Interacts with endometrial receptors, probably type I interferon receptors, and blocks estrogen receptor expression, preventing the estrogen-induced increase in oxytocin receptor expression in the endometrium. This results in the suppression of the pulsatile endometrial release of the luteolytic hormone prostaglandin F2-alpha, hindering the regression of the corpus luteum (luteolysis) and therefore a return to ovarian cyclicity. This, and a possible direct effect of IFN-tau on prostaglandin synthesis, leads in turn to continued ovarian progesterone secretion, which stimulates the secretion by the endometrium of the nutrients required for the growth of the conceptus. In summary, displays particularly high antiviral and antiproliferative potency concurrently with particular weak cytotoxicity, high antiluteolytic activity and immunomodulatory properties. In contrast with other IFNs, IFN-tau is not virally inducible. The protein is Interferon tau (IFNT) of Ovibos moschatus (Muskox).